The chain runs to 154 residues: MTSESTSPPVVPPLHSPKSPVWPTFPFHRESSRIWERGGGVSPRDLPSPLPTKRTRTYSATARASAGPVFKGVCKQFSRSQGHGFITPENGSEDIFVHVSDIEGEYVPVEGDEVTYKMCPIPPKNQKFQAVEVVLTQLAPHTPHETWSGQVVGS.

Disordered regions lie at residues 1–22 (MTSESTSPPVVPPLHSPKSPVW) and 36–62 (ERGGGVSPRDLPSPLPTKRTRTYSATA). Residue Ser19 is modified to Phosphoserine. Residues 69-136 (VFKGVCKQFS…KFQAVEVVLT (68 aa)) enclose the CSD domain.

In terms of tissue distribution, brain-specific. Expression restricted to the pyramidal neurons of the cerebral cortex and in the Purkinje cells of the cerebellum.

It localises to the nucleus. The protein resides in the cytoplasm. RNA-binding factor which binds specifically to the very 3'-UTR ends of both histone H1 and H3.3 mRNAs, encompassing the polyadenylation signal. Might play a central role in the negative regulation of histone variant synthesis in the developing brain. This Rattus norvegicus (Rat) protein is Cold shock domain-containing protein C2 (Csdc2).